The chain runs to 1778 residues: Nuclear receptor corepressor 1 (1778 aa).

The 52-residue stretch at 125–176 (DRLEEWSPEERSLFKSRQADHVKIFHGLTEFFVDKTASDLVLFYYMNKKTED) folds into the SANT domain. In terms of domain architecture, Myb-like spans 356–398 (WTDDEKTKLVTLINSSPTLDWVSISEGMNRRPNECKMQYDAMN). Residues 409-421 (VDEEDGNGQEEGG) are compositionally biased toward acidic residues. 6 disordered regions span residues 409–671 (VDEE…TVST), 992–1024 (SLTP…AGRS), 1195–1218 (KLQQ…ATPQ), 1276–1339 (QHLQ…SRSV), 1414–1434 (PPKT…RTLS), and 1646–1718 (AAPT…PPLP). Low complexity-rich tracts occupy residues 431 to 442 (SSAAARRSGLAR) and 450 to 469 (TPRA…VTRA). Over residues 478 to 493 (DLGEEIDEMEIEDNDE) the composition is skewed to acidic residues. The span at 494-513 (DASRGSRGKDSKAPSDRDGS) shows a compositional bias: basic and acidic residues. 2 stretches are compositionally biased toward acidic residues: residues 517–545 (MEGD…EEEE) and 599–616 (ESDD…DVDE). Low complexity-rich tracts occupy residues 626–639 (SSSS…SVGG) and 649–671 (LVQQ…TVST). Residues 1276–1285 (QHLQQQQQHH) show a composition bias toward low complexity. A compositionally biased stretch (low complexity) spans 1687–1696 (SSVNSNVSDV).

This sequence belongs to the N-CoR nuclear receptor corepressors family. In terms of assembly, interacts with gex-3. Interacts (via C-terminus) with nhr-60. In larvae, expressed in pharyngeal neurons, ventral and dorsal nerve cords, tail neurons, egg-laying neurons and egg-laying muscles. Detected in the neurons of the pharyngeal nerve ring, head neurons, tail neurons and egg-laying muscles in adults. Detected in male-specific tail ganglia and rays in males.

It is found in the nucleus. Its function is as follows. Mediates transcriptional repression by certain nuclear receptors. Plays a role in development and neuronal function. May play a role in muscle-specific oxidative mitochondrial metabolism. This Caenorhabditis elegans protein is Nuclear receptor corepressor 1.